The chain runs to 265 residues: Protein B8 (265 aa).

In Homo sapiens (Human), this protein is Protein B8 (B8).